We begin with the raw amino-acid sequence, 964 residues long: uncharacterized protein (964 aa).

Residues 97–117 (DSESDVGSDAESDAESDAESD) are compositionally biased toward acidic residues. The segment at 97–208 (DSESDVGSDA…SNSIDNESES (112 aa)) is disordered. Positions 121-148 (HTQNNTNTPINNITLINLDSSNNSTQSD) are enriched in low complexity. Positions 149–163 (NESDNESDNESDNES) are enriched in acidic residues. Residues 192–203 (NSDNIGNSNSID) show a composition bias toward low complexity.

This is an uncharacterized protein from Acanthamoeba polyphaga (Amoeba).